The following is a 374-amino-acid chain: Trehalose-phosphate phosphatase B (374 aa).

Belongs to the trehalose phosphatase family. The cofactor is a divalent metal cation. As to expression, expressed in flowers.

The catalysed reaction is alpha,alpha-trehalose 6-phosphate + H2O = alpha,alpha-trehalose + phosphate. Its pathway is glycan biosynthesis; trehalose biosynthesis. Functionally, removes the phosphate from trehalose 6-phosphate to produce free trehalose. Trehalose accumulation in plant may improve abiotic stress tolerance. The protein is Trehalose-phosphate phosphatase B (TPPB) of Arabidopsis thaliana (Mouse-ear cress).